The primary structure comprises 1807 residues: Vitellogenin-2 (1807 aa).

An N-terminal signal peptide occupies residues 1-16; sequence MWFPVTLLFLAGVAVA. The Vitellogenin domain maps to 24-819; the sequence is WETGNEYQYS…LIPKYVYVGV (796 aa). Residues C180 and C224 are joined by a disulfide bond. The tract at residues 334-402 is disordered; that stretch reads SDSDNRRVRH…SSSSSSEEEN (69 aa). A compositionally biased stretch (low complexity) spans 346–397; the sequence is VSQNSEQENSSESSKSSSQSSSSSSSASSSSSSSSSSSSSSSSSSSSSSSSS. 7 N-linked (GlcNAc...) asparagine glycosylation sites follow: N354, N579, N635, N1181, N1304, N1373, and N1506. Residues 1448-1636 enclose the VWFD domain; the sequence is QSCTLDKDKV…TYAMTQENCQ (189 aa). 2 disulfide bridges follow: C1450/C1599 and C1472/C1635. 2 disordered regions span residues 1635–1655 and 1684–1723; these read CQGP…HEFP and NRNK…KKHN. N1693 is a glycosylation site (N-linked (GlcNAc...) asparagine). A compositionally biased stretch (polar residues) spans 1700-1714; the sequence is KKQYQANSQESGSSE.

It localises to the secreted. Precursor of the egg-yolk proteins that are sources of nutrients during embryonic development. The sequence is that of Vitellogenin-2 from Solenopsis invicta (Red imported fire ant).